The following is a 94-amino-acid chain: Co-chaperonin GroES (94 aa).

This sequence belongs to the GroES chaperonin family. Heptamer of 7 subunits arranged in a ring. Interacts with the chaperonin GroEL.

The protein resides in the cytoplasm. Together with the chaperonin GroEL, plays an essential role in assisting protein folding. The GroEL-GroES system forms a nano-cage that allows encapsulation of the non-native substrate proteins and provides a physical environment optimized to promote and accelerate protein folding. GroES binds to the apical surface of the GroEL ring, thereby capping the opening of the GroEL channel. In Streptococcus pneumoniae serotype 19F (strain G54), this protein is Co-chaperonin GroES.